A 448-amino-acid polypeptide reads, in one-letter code: Divalent metal cation transporter MntH (448 aa).

11 consecutive transmembrane segments (helical) span residues Leu41–Trp61, Ser69–Leu89, Gly117–Ile137, Phe147–Phe167, Ile176–Val196, Ile215–Pro235, Phe270–Phe290, Leu307–Ala327, Val363–Glu383, Leu384–Val404, and Ile424–Thr444.

Belongs to the NRAMP family.

The protein resides in the cell membrane. In terms of biological role, h(+)-stimulated, divalent metal cation uptake system. This Listeria welshimeri serovar 6b (strain ATCC 35897 / DSM 20650 / CCUG 15529 / CIP 8149 / NCTC 11857 / SLCC 5334 / V8) protein is Divalent metal cation transporter MntH.